Consider the following 113-residue polypeptide: Putative pterin-4-alpha-carbinolamine dehydratase (113 aa).

The protein belongs to the pterin-4-alpha-carbinolamine dehydratase family.

It catalyses the reaction (4aS,6R)-4a-hydroxy-L-erythro-5,6,7,8-tetrahydrobiopterin = (6R)-L-erythro-6,7-dihydrobiopterin + H2O. The chain is Putative pterin-4-alpha-carbinolamine dehydratase from Chlorobium limicola (strain DSM 245 / NBRC 103803 / 6330).